We begin with the raw amino-acid sequence, 715 residues long: Methylcrotonoyl-CoA carboxylase subunit alpha, mitochondrial (715 aa).

The transit peptide at 1–38 (MAAAALLAAVDRNQLRRVPILLLQPREWPWKHRTVKYG) directs the protein to the mitochondrion. The region spanning 45–490 (ITKVLIANRG…HTDFIPQHHK (446 aa)) is the Biotin carboxylation domain. K159 is a binding site for ATP. The 198-residue stretch at 163–360 (KSIMAAAGVP…LVEWQLRIAA (198 aa)) folds into the ATP-grasp domain. K193 carries the post-translational modification N6-acetyllysine. Residues K201 and 207–208 (GG) each bind ATP. K233 is modified (N6-acetyllysine). Residues H251, H278, and E318 each coordinate ATP. R335 is a catalytic residue. Residue K490 is modified to N6-acetyllysine. N6-acetyllysine; alternate is present on K577. K577 is subject to N6-succinyllysine; alternate. The 90-residue stretch at 622 to 711 (SIEVGIPVPK…NRHAPLVEFE (90 aa)) folds into the Biotinyl-binding domain. N6-biotinyllysine is present on K677.

In terms of assembly, probably a dodecamer composed of six biotin-containing alpha subunits (MCCC1) and six beta (MCCC2) subunits. Interacts (via the biotin carboxylation domain) with SIRT4. The cofactor is biotin. Post-translationally, acetylated.

It localises to the mitochondrion matrix. The catalysed reaction is 3-methylbut-2-enoyl-CoA + hydrogencarbonate + ATP = 3-methyl-(2E)-glutaconyl-CoA + ADP + phosphate + H(+). It participates in amino-acid degradation; L-leucine degradation; (S)-3-hydroxy-3-methylglutaryl-CoA from 3-isovaleryl-CoA: step 2/3. Functionally, biotin-attachment subunit of the 3-methylcrotonyl-CoA carboxylase, an enzyme that catalyzes the conversion of 3-methylcrotonyl-CoA to 3-methylglutaconyl-CoA, a critical step for leucine and isovaleric acid catabolism. The polypeptide is Methylcrotonoyl-CoA carboxylase subunit alpha, mitochondrial (Rattus norvegicus (Rat)).